Reading from the N-terminus, the 147-residue chain is Interleukin-4 (147 aa).

An N-terminal signal peptide occupies residues 1-19; that stretch reads MGLRPQLAAILLCLLACTG. Residues Asn20, Asn61, Asn90, and Asn117 are each glycosylated (N-linked (GlcNAc...) asparagine). Intrachain disulfides connect Cys47-Cys87 and Cys69-Cys114.

It belongs to the IL-4/IL-13 family.

It is found in the secreted. Functionally, participates in at least several B-cell activation processes as well as of other cell types. It is a costimulator of DNA-synthesis. It induces the expression of class II MHC molecules on resting B-cells. It enhances both secretion and cell surface expression of IgE and IgG1. It also regulates the expression of the low affinity Fc receptor for IgE (CD23) on both lymphocytes and monocytes. Positively regulates IL31RA expression in macrophages. Stimulates autophagy in dendritic cells by interfering with mTORC1 signaling and through the induction of RUFY4. This is Interleukin-4 (IL4) from Mesocricetus auratus (Golden hamster).